We begin with the raw amino-acid sequence, 109 residues long: Co-chaperonin GroES (109 aa).

It belongs to the GroES chaperonin family. In terms of assembly, heptamer of 7 subunits arranged in a ring. Interacts with the chaperonin GroEL.

It is found in the cytoplasm. Its function is as follows. Together with the chaperonin GroEL, plays an essential role in assisting protein folding. The GroEL-GroES system forms a nano-cage that allows encapsulation of the non-native substrate proteins and provides a physical environment optimized to promote and accelerate protein folding. GroES binds to the apical surface of the GroEL ring, thereby capping the opening of the GroEL channel. The polypeptide is Co-chaperonin GroES (Methanosarcina acetivorans (strain ATCC 35395 / DSM 2834 / JCM 12185 / C2A)).